A 592-amino-acid polypeptide reads, in one-letter code: Prospero homeobox protein 2 (592 aa).

5 disordered regions span residues 20–56, 85–129, 155–218, 308–336, and 353–382; these read EACT…PEWF, GNAQ…RKGG, KPRD…LPSG, RLDS…PLTA, and RYNN…LRPW. Residues 95 to 106 are compositionally biased toward basic residues; the sequence is CPKKARERKRKQ. A compositionally biased stretch (basic and acidic residues) spans 201–211; that stretch reads SGAEKHQESEK. The segment covering 314-331 has biased composition (pro residues); sequence YPIPPRMTPKPCQDPPAN. Residues 360 to 377 show a composition bias toward low complexity; it reads SSSPPQDSSSQRHPSSEP. The Prospero-type homeo domain occupies 437-495; that stretch reads QEGLNPGHLKKAKLMFFFTRYPSSNLLKVYFPDVQFNRCITSQMIKWFSNFREFYYIQM. Residues 437 to 592 are homeo-Prospero; the sequence is QEGLNPGHLK…EIFKSSSYPQ (156 aa). Positions 496–592 constitute a Prospero domain; sequence EKSARQAISD…EIFKSSSYPQ (97 aa).

This sequence belongs to the Prospero homeodomain family.

The protein resides in the nucleus. Functionally, transcription regulator. Does not seem to be essential for embryonic development and postnatal survival. This is Prospero homeobox protein 2 (PROX2) from Homo sapiens (Human).